A 1013-amino-acid chain; its full sequence is Probable outer membrane protein PmpG (1013 aa).

The signal sequence occupies residues 1-27 (MQTSFHKFFLSMILAYSCCSLSGGGYA). In terms of domain architecture, Autotransporter spans 733–1013 (GRSYCRGLWV…GLSAGSKVRF (281 aa)).

Belongs to the PMP outer membrane protein family.

The protein localises to the secreted. Its subcellular location is the cell wall. The protein resides in the cell outer membrane. In Chlamydia trachomatis serovar D (strain ATCC VR-885 / DSM 19411 / UW-3/Cx), this protein is Probable outer membrane protein PmpG (pmpG).